A 372-amino-acid polypeptide reads, in one-letter code: 4-hydroxy-3-methylbut-2-en-1-yl diphosphate synthase (flavodoxin) (372 aa).

Residues Cys-270, Cys-273, Cys-305, and Glu-312 each coordinate [4Fe-4S] cluster.

It belongs to the IspG family. [4Fe-4S] cluster serves as cofactor.

It carries out the reaction (2E)-4-hydroxy-3-methylbut-2-enyl diphosphate + oxidized [flavodoxin] + H2O + 2 H(+) = 2-C-methyl-D-erythritol 2,4-cyclic diphosphate + reduced [flavodoxin]. It functions in the pathway isoprenoid biosynthesis; isopentenyl diphosphate biosynthesis via DXP pathway; isopentenyl diphosphate from 1-deoxy-D-xylulose 5-phosphate: step 5/6. Its function is as follows. Converts 2C-methyl-D-erythritol 2,4-cyclodiphosphate (ME-2,4cPP) into 1-hydroxy-2-methyl-2-(E)-butenyl 4-diphosphate. This Aliivibrio salmonicida (strain LFI1238) (Vibrio salmonicida (strain LFI1238)) protein is 4-hydroxy-3-methylbut-2-en-1-yl diphosphate synthase (flavodoxin).